A 201-amino-acid chain; its full sequence is MPQAVAGPEIERLIQLLARMPGLGPRSARRAALQLIKKREALLAPLAEAMRVACERIVVCHECGNVDTSDPCTICRDHSRDPSILVVVEDVSDLWALERSGAVTARYHVLGGVLSALDGIRPENLNLSRLVERASVPEMREVILALNATVDGQTTAHYITELLAHLPVKVTKLAHGVPVGGELDYLDEGTLSAAIRQRTAF.

A C4-type zinc finger spans residues 60–75; that stretch reads CHECGNVDTSDPCTIC. The region spanning 83 to 178 is the Toprim domain; sequence SILVVVEDVS…KVTKLAHGVP (96 aa).

It belongs to the RecR family.

May play a role in DNA repair. It seems to be involved in an RecBC-independent recombinational process of DNA repair. It may act with RecF and RecO. The chain is Recombination protein RecR from Methylobacterium nodulans (strain LMG 21967 / CNCM I-2342 / ORS 2060).